Consider the following 2640-residue polypeptide: Collagen alpha-5(VI) chain (2640 aa).

The N-terminal stretch at 1-18 (MKLRLIAFVLILWTETLA) is a signal peptide. A nonhelical region region spans residues 19–1426 (DQSPGPGPEY…ACCCTFCKCP (1408 aa)). VWFA domains follow at residues 30 to 209 (DVVF…IKDV), 268 to 445 (DLIF…LKKI), 474 to 644 (DIYF…KNEI), 660 to 829 (DIMF…ESKL), 846 to 1023 (DIVF…QETL), 1037 to 1214 (DVIF…VREI), and 1226 to 1413 (DVVV…LGNI). Residues Asn-201, Asn-292, and Asn-614 are each glycosylated (N-linked (GlcNAc...) asparagine). 5 Collagen-like domains span residues 1426–1478 (PGIP…GCPG), 1474–1524 (VGCP…DPGN), 1557–1614 (GQKG…GPEG), 1632–1689 (GSQG…GIPG), and 1706–1762 (GDPG…AGQP). The segment at 1427 to 1760 (GIPGPHGTRG…GRRGPKGTAG (334 aa)) is triple-helical region. Residues 1435 to 1761 (RGLQASKGSS…RRGPKGTAGQ (327 aa)) form a disordered region. Residues 1452–1464 (HRGEDGDPGRRGE) are compositionally biased toward basic and acidic residues. Over residues 1537–1567 (DGEKGFPGDPGDPGKDSNIKGQKGEKGERGR) the composition is skewed to basic and acidic residues. A compositionally biased stretch (polar residues) spans 1597 to 1609 (PSGQAGNPGPQGT). Residues 1610-1622 (QGPEGLQGSQGSS) show a composition bias toward low complexity. The short motif at 1649-1651 (RGD) is the Cell attachment site element. Gly residues predominate over residues 1718–1727 (GIPGGPGPKG). A compositionally biased stretch (low complexity) spans 1740-1750 (RSGLQGSQGPP). The nonhelical region stretch occupies residues 1761–2640 (QPIYSPCELI…NSKQDGEDAR (880 aa)). 2 VWFA domains span residues 1790 to 1970 (ELVF…KLRR) and 1996 to 2186 (DVAF…VKFL). 2 short sequence motifs (cell attachment site) span residues 2216–2218 (RGD) and 2259–2261 (RGD). The VWFA 10 domain occupies 2321–2516 (DVAFLIDASQ…PDLDYVIKFI (196 aa)). An N-linked (GlcNAc...) asparagine glycan is attached at Asn-2541. A disordered region spans residues 2617 to 2640 (DKEEPCSAETPAPVNSKQDGEDAR).

The protein belongs to the type VI collagen family. In terms of assembly, trimers composed of three different chains: alpha-1(VI), alpha-2(VI), and alpha-3(VI) or alpha-4(VI) or alpha-5(VI) or alpha-6(VI). In terms of processing, prolines at the third position of the tripeptide repeating unit (G-X-Y) are hydroxylated in some or all of the chains. In newborn, it is expressed in lung, heart, kidney, muscle, brain, intestine, skin, femur, sternum and calvaria. In adult, it is widely expressed and is detected in lung, heart, kidney, spleen, muscle, ovary, uterus, brain, skin, liver and sternum.

It localises to the secreted. The protein localises to the extracellular space. The protein resides in the extracellular matrix. Functionally, collagen VI acts as a cell-binding protein. The sequence is that of Collagen alpha-5(VI) chain (Col6a5) from Mus musculus (Mouse).